The following is a 327-amino-acid chain: Probable cell division protein WhiA (327 aa).

Residues Ser275 to Lys308 constitute a DNA-binding region (H-T-H motif). The segment at Asp304–Ala327 is disordered.

This sequence belongs to the WhiA family.

Functionally, involved in cell division and chromosome segregation. The sequence is that of Probable cell division protein WhiA from Mycobacterium sp. (strain MCS).